The following is a 574-amino-acid chain: VAO-type flavoprotein oxidase VAO615 (574 aa).

Positions methionine 1–glycine 17 are cleaved as a signal peptide. Cystine bridges form between cysteine 28-cysteine 572, cysteine 64-cysteine 77, cysteine 108-cysteine 118, and cysteine 450-cysteine 476. Asparagine 47 carries an N-linked (GlcNAc...) asparagine glycan. The N-linked (GlcNAc...) asparagine glycan is linked to asparagine 105. Residues leucine 120–aspartate 299 form the FAD-binding PCMH-type domain. N-linked (GlcNAc...) asparagine glycans are attached at residues asparagine 129, asparagine 211, asparagine 310, asparagine 346, and asparagine 438. Positions histidine 157–cysteine 222 form a cross-link, 6-(S-cysteinyl)-8alpha-(pros-histidyl)-FAD (His-Cys).

Belongs to the oxygen-dependent FAD-linked oxidoreductase family. Requires FAD as cofactor. Post-translationally, the FAD cofactor is bound via a bicovalent 6-S-cysteinyl, 8alpha-N1-histidyl FAD linkage.

It is found in the secreted. Its function is as follows. Probably oxidoreductase that, when reduced, rapidly reacts with molecular oxygen, a hallmark of flavoprotein oxidases. A large panel of alcohols, including carbohydrates, steroids and secondary alcohols were tested as potential substrates, but none has been identified so far. The protein is VAO-type flavoprotein oxidase VAO615 of Thermothelomyces thermophilus (strain ATCC 42464 / BCRC 31852 / DSM 1799) (Sporotrichum thermophile).